The following is a 122-amino-acid chain: Putative ankyrin repeat protein L22 (122 aa).

ANK repeat units follow at residues aspartate 3 to alanine 32, aspartate 33 to valine 62, asparagine 63 to alanine 92, and aspartate 94 to glutamine 122.

This chain is Putative ankyrin repeat protein L22, found in Acanthamoeba polyphaga (Amoeba).